A 105-amino-acid polypeptide reads, in one-letter code: Keratin-associated protein 17-1 (105 aa).

Interacts with hair keratins.

Its function is as follows. In the hair cortex, hair keratin intermediate filaments are embedded in an interfilamentous matrix, consisting of hair keratin-associated proteins (KRTAP), which are essential for the formation of a rigid and resistant hair shaft through their extensive disulfide bond cross-linking with abundant cysteine residues of hair keratins. The matrix proteins include the high-sulfur and high-glycine-tyrosine keratins. The protein is Keratin-associated protein 17-1 (KRTAP17-1) of Homo sapiens (Human).